Reading from the N-terminus, the 313-residue chain is Chemotaxis protein CheV2 (313 aa).

The CheW-like domain occupies 16-172; it reads EAQFLCFRLD…VEKMISDVFP (157 aa). Positions 193–313 constitute a Response regulatory domain; the sequence is LILIAEDSLS…IHEMLKKTLS (121 aa). Residue Asp-246 is modified to 4-aspartylphosphate.

Phosphorylated; probably by transfer of CheAY phosphate group.

Its function is as follows. Plays a role in chemotaxis signal transduction system in order to colonize the host stomach. May act as a phosphate sink to control the flow of phosphate to CheAY. The polypeptide is Chemotaxis protein CheV2 (Helicobacter pylori (strain ATCC 700392 / 26695) (Campylobacter pylori)).